Here is a 353-residue protein sequence, read N- to C-terminus: Suppressor of RNA-mediated gene silencing (353 aa).

The protein belongs to the phytoreovirus non-structural protein 10 family.

In terms of biological role, suppressor of RNA-mediated gene silencing, also known as post-transcriptional gene silencing (PTGS), a mechanism of plant viral defense that limits the accumulation of viral RNAs. The chain is Suppressor of RNA-mediated gene silencing from Rice dwarf virus (isolate Fujian) (RDV).